Here is a 684-residue protein sequence, read N- to C-terminus: Chaperone protein HtpG (684 aa).

The interval 1 to 329 (MSKKGTIGVT…SPDIPLNVSR (329 aa)) is a; substrate-binding. Positions 330 to 548 (SYLQSDANVK…FMRRMRDMAQ (219 aa)) are b. The interval 549-684 (LQPGMSFYGE…EFIRRSQRLL (136 aa)) is c.

Belongs to the heat shock protein 90 family. In terms of assembly, homodimer.

The protein localises to the cytoplasm. Functionally, molecular chaperone. Has ATPase activity. The protein is Chaperone protein HtpG of Porphyromonas gingivalis (strain ATCC BAA-308 / W83).